Reading from the N-terminus, the 61-residue chain is Disintegrin atroxatin (61 aa).

The 61-residue stretch at 1–61 (NPCCDAATCK…ADCPRKGIYG (61 aa)) folds into the Disintegrin domain. Disulfide bonds link cysteine 3-cysteine 26, cysteine 9-cysteine 23, cysteine 17-cysteine 23, cysteine 22-cysteine 47, and cysteine 35-cysteine 54. A Cell attachment site motif is present at residues 39–41 (RGD).

This sequence belongs to the venom metalloproteinase (M12B) family. P-II subfamily. P-IIa sub-subfamily. In terms of assembly, monomer (disintegrin). Expressed by the venom gland.

It localises to the secreted. In terms of biological role, inhibits fibrinogen interaction with platelets. Acts by binding to alpha-IIb/beta-3 (ITGA2B/ITGB3) on the platelet surface and inhibits aggregation induced by ADP, thrombin, platelet-activating factor and collagen. This chain is Disintegrin atroxatin, found in Crotalus atrox (Western diamondback rattlesnake).